A 421-amino-acid polypeptide reads, in one-letter code: Testin (421 aa).

A PET domain is found at 92–199 (MILTNPVAAK…GDVKLPREMD (108 aa)). The interval 133 to 164 (EKQPVAGSEGAQYRKKQLAKQLPAHDQDPSKC) is disordered. Basic and acidic residues predominate over residues 155–164 (PAHDQDPSKC). LIM zinc-binding domains lie at 234 to 297 (YSCY…CDSE), 299 to 359 (PRCA…NHAV), and 362 to 421 (QGCH…KMMS).

The protein belongs to the prickle / espinas / testin family. As to quaternary structure, interacts via LIM domain 1 with ZYX. Interacts (via LIM domain 3) with ENAH and VASP. Interacts with ALKBH4, talin, actin, alpha-actinin, GRIP1 and PXN. Interacts (via LIM domain 2) with ACTL7A (via N-terminus). Heterodimer with ACTL7A; the heterodimer interacts with ENAH to form a heterotrimer.

Its subcellular location is the cytoplasm. It is found in the cell junction. It localises to the focal adhesion. Scaffold protein that may play a role in cell adhesion, cell spreading and in the reorganization of the actin cytoskeleton. Plays a role in the regulation of cell proliferation. May act as a tumor suppressor. This Canis lupus familiaris (Dog) protein is Testin (TES).